The sequence spans 494 residues: Glycerol kinase 1 (494 aa).

Thr12 provides a ligand contact to ADP. The ATP site is built by Thr12, Thr13, and Ser14. Position 12 (Thr12) interacts with sn-glycerol 3-phosphate. Residue Arg16 coordinates ADP. Arg82, Glu83, Tyr134, and Asp243 together coordinate sn-glycerol 3-phosphate. Glycerol contacts are provided by Arg82, Glu83, Tyr134, Asp243, and Gln244. The ADP site is built by Thr265 and Gly308. 4 residues coordinate ATP: Thr265, Gly308, Gln312, and Gly408. ADP-binding residues include Gly408 and Asn412.

This sequence belongs to the FGGY kinase family.

The catalysed reaction is glycerol + ATP = sn-glycerol 3-phosphate + ADP + H(+). The protein operates within polyol metabolism; glycerol degradation via glycerol kinase pathway; sn-glycerol 3-phosphate from glycerol: step 1/1. Inhibited by fructose 1,6-bisphosphate (FBP). Functionally, key enzyme in the regulation of glycerol uptake and metabolism. Catalyzes the phosphorylation of glycerol to yield sn-glycerol 3-phosphate. The protein is Glycerol kinase 1 of Pseudomonas aeruginosa (strain ATCC 15692 / DSM 22644 / CIP 104116 / JCM 14847 / LMG 12228 / 1C / PRS 101 / PAO1).